The primary structure comprises 258 residues: Imidazole glycerol phosphate synthase subunit HisF (258 aa).

Active-site residues include Asp-11 and Asp-130.

This sequence belongs to the HisA/HisF family. In terms of assembly, heterodimer of HisH and HisF.

Its subcellular location is the cytoplasm. The enzyme catalyses 5-[(5-phospho-1-deoxy-D-ribulos-1-ylimino)methylamino]-1-(5-phospho-beta-D-ribosyl)imidazole-4-carboxamide + L-glutamine = D-erythro-1-(imidazol-4-yl)glycerol 3-phosphate + 5-amino-1-(5-phospho-beta-D-ribosyl)imidazole-4-carboxamide + L-glutamate + H(+). It functions in the pathway amino-acid biosynthesis; L-histidine biosynthesis; L-histidine from 5-phospho-alpha-D-ribose 1-diphosphate: step 5/9. Its function is as follows. IGPS catalyzes the conversion of PRFAR and glutamine to IGP, AICAR and glutamate. The HisF subunit catalyzes the cyclization activity that produces IGP and AICAR from PRFAR using the ammonia provided by the HisH subunit. This Bradyrhizobium sp. (strain ORS 278) protein is Imidazole glycerol phosphate synthase subunit HisF.